The chain runs to 852 residues: Transient receptor potential cation channel subfamily V member 4 (852 aa).

Over 1-455 (MADPEDPRDA…RDKWRKFGAV (455 aa)) the chain is Cytoplasmic. Residues 30-51 (VEDTPSPAEPSRGPPGAVDGKQ) form a disordered region. ATP contacts are provided by residues Lys178, Lys183, Asn187, 222–225 (YRGQ), and Arg234. ANK repeat units lie at residues 223–252 (RGQT…DVHA) and 270–299 (FGEL…KQAD). A 1,2-diacyl-sn-glycero-3-phospho-(1D-myo-inositol-4,5-bisphosphate) contacts are provided by residues 235–237 (RCK), 282–285 (NQPH), and Lys330. The stretch at 355 to 387 (DGLSPLMMAAKTGKIGIFQHIIRREIADEDVRH) is one ANK 3 repeat. A helical transmembrane segment spans residues 456–476 (SFYISVVSYLCAMIIFTLIAY). The Extracellular portion of the chain corresponds to 477–493 (YRPMEGPPPYPYTTTID). A helical membrane pass occupies residues 494–520 (YLRLAGEIITLLTGILFFFSNIKDLFM). The Cytoplasmic segment spans residues 521-533 (KKCPGVNSFFIDG). A helical transmembrane segment spans residues 534–554 (SFQLLYFIYSVLVIVTAGLYL). At 555–558 (GGVE) the chain is on the extracellular side. The helical transmembrane segment at 559 to 579 (AYLAVMVFALVLGWMNALYFT) threads the bilayer. The Cytoplasmic portion of the chain corresponds to 580–594 (RGLKLTGTYSIMIQK). The helical transmembrane segment at 595 to 622 (ILFKDLFRFLLVYLLFMIGYASALVSLL) threads the bilayer. The Extracellular segment spans residues 623-651 (NPCPSSESCSEDHSNCTLPTYPSCRDSQT). An intramembrane region (pore-forming) is located at residues 652–671 (FSTFLLDLFKLTIGMGDLEM). The short motif at 665 to 668 (GMGD) is the Selectivity filter element. Asp668 serves as a coordination point for Ca(2+). Over 672–679 (LESAKYPG) the chain is Extracellular. A helical transmembrane segment spans residues 680–708 (VFIILLVTYIILTFVLLLNMLIALMGETV). Residues 709–852 (GQVSKESKHI…RHGQTPSSPL (144 aa)) lie on the Cytoplasmic side of the membrane.

This sequence belongs to the transient receptor (TC 1.A.4) family. TrpV subfamily. TRPV4 sub-subfamily. As to quaternary structure, homotetramer. Interacts with Ca(2+)-calmodulin.

It localises to the apical cell membrane. Its subcellular location is the cell junction. The protein localises to the adherens junction. The enzyme catalyses Ca(2+)(in) = Ca(2+)(out). Its activity is regulated as follows. ATP binding enhances channel sensitivity to agonists. Ca(2+)-calmodulin prevents the ATP-mediated increased sensitivity to agonists. In terms of biological role, non-selective calcium permeant cation channel involved in osmotic sensitivity and mechanosensitivity. Activation by exposure to hypotonicity within the physiological range exhibits an outward rectification. Also activated by phorbol esters. Channel activity seems to be regulated by a calmodulin-dependent mechanism. In Gallus gallus (Chicken), this protein is Transient receptor potential cation channel subfamily V member 4 (TRPV4).